The primary structure comprises 1049 residues: Bifunctional cytochrome P450/NADPH--P450 reductase (1049 aa).

The cytochrome P450 stretch occupies residues 2-472; sequence TIKEMPQPKT…STEQSAKKVR (471 aa). (9Z)-hexadecenoate is bound at residue tyrosine 52. Cysteine 401 is a heme binding site. Residues 473–1049 are NADPH--P450 reductase; the sequence is KKAENAHNTP…GRYAKDVWAG (577 aa). The Flavodoxin-like domain maps to 483–622; sequence LLVLYGSNMG…TYEEWREHMW (140 aa). FMN is bound by residues 489-494, 536-539, 570-572, and 578-580; these read SNMGTA, SYNG, CGD, and TYQ. Positions 660–892 constitute an FAD-binding FR-type domain; that stretch reads HGAFSTNVVA…STPQSEFTLP (233 aa).

It in the N-terminal section; belongs to the cytochrome P450 family. FAD serves as cofactor. Requires FMN as cofactor. Heme is required as a cofactor.

Its subcellular location is the cytoplasm. The catalysed reaction is 2 oxidized [cytochrome P450] + NADPH = 2 reduced [cytochrome P450] + NADP(+) + H(+). It carries out the reaction an organic molecule + reduced [NADPH--hemoprotein reductase] + O2 = an alcohol + oxidized [NADPH--hemoprotein reductase] + H2O + H(+). With respect to regulation, inhibited by N-(12-imidazolyl-dodecanoyl)-L-leucine. Its function is as follows. Functions as a fatty acid monooxygenase. Catalyzes hydroxylation of fatty acids at omega-1, omega-2 and omega-3 positions. Shows activity toward medium and long-chain fatty acids, with optimum chain lengths of 12, 14 and 16 carbons (lauric, myristic, and palmitic acids). Able to metabolize some of these primary metabolites to secondary and tertiary products. Marginal activity towards short chain lengths of 8-10 carbons. Hydroxylates highly branched fatty acids, which play an essential role in membrane fluidity regulation. Also displays a NADPH-dependent reductase activity in the C-terminal domain, which allows electron transfer from NADPH to the heme iron of the cytochrome P450 N-terminal domain. Involved in inactivation of quorum sensing signals of other competing bacteria by oxidazing efficiently acyl homoserine lactones (AHLs), molecules involved in quorum sensing signaling pathways, and their lactonolysis products acyl homoserines (AHs). This Priestia megaterium (strain ATCC 14581 / DSM 32 / CCUG 1817 / JCM 2506 / NBRC 15308 / NCIMB 9376 / NCTC 10342 / NRRL B-14308 / VKM B-512 / Ford 19) (Bacillus megaterium) protein is Bifunctional cytochrome P450/NADPH--P450 reductase.